Reading from the N-terminus, the 873-residue chain is Chitin synthase F (873 aa).

The tract at residues 1 to 105 (MEDAHDQSSR…KSGSGLRRYP (105 aa)) is disordered. Composition is skewed to polar residues over residues 33-46 (SYPS…SQSL), 58-72 (ISSQ…QNPS), and 80-98 (ESEV…TKSG). The N-linked (GlcNAc...) asparagine glycan is linked to N506. A run of 7 helical transmembrane segments spans residues 532 to 554 (LVFL…FSLA), 588 to 608 (IVNN…FFLA), 621 to 641 (ILTF…SFYL), 672 to 692 (GLVL…SILY), 702 to 722 (SWAY…YAFC), 802 to 822 (LVLL…NDSV), and 841 to 861 (VILW…LWFL).

This sequence belongs to the chitin synthase family. Class III subfamily.

The protein resides in the cell membrane. It carries out the reaction [(1-&gt;4)-N-acetyl-beta-D-glucosaminyl](n) + UDP-N-acetyl-alpha-D-glucosamine = [(1-&gt;4)-N-acetyl-beta-D-glucosaminyl](n+1) + UDP + H(+). Functionally, polymerizes chitin, a structural polymer of the cell wall and septum, by transferring the sugar moiety of UDP-GlcNAc to the non-reducing end of the growing chitin polymer. Plays an important role in septal growth or maintenance. Mediates colony spore formation. The chain is Chitin synthase F from Aspergillus niger (strain ATCC MYA-4892 / CBS 513.88 / FGSC A1513).